Here is a 350-residue protein sequence, read N- to C-terminus: Protein pelota homolog (350 aa).

Belongs to the eukaryotic release factor 1 family. Pelota subfamily. As to quaternary structure, monomer. Requires a divalent metal cation as cofactor.

It localises to the cytoplasm. May function in recognizing stalled ribosomes, interact with stem-loop structures in stalled mRNA molecules, and effect endonucleolytic cleavage of the mRNA. May play a role in the release non-functional ribosomes and degradation of damaged mRNAs. Has endoribonuclease activity. This Methanosarcina barkeri (strain Fusaro / DSM 804) protein is Protein pelota homolog.